We begin with the raw amino-acid sequence, 83 residues long: Hainantoxin-III 5 (83 aa).

Positions 1–21 (MKASRFLALAGLVLLFVVGYA) are cleaved as a signal peptide. The propeptide occupies 22–48 (SESEEKEFPRELLSKIFAVDDFKGEER). 3 disulfide bridges follow: cysteine 50-cysteine 65, cysteine 57-cysteine 70, and cysteine 64-cysteine 77. Leucine 81 carries the post-translational modification Leucine amide.

The protein belongs to the neurotoxin 10 (Hwtx-1) family. 15 (Hntx-3) subfamily. As to quaternary structure, monomer. As to expression, expressed by the venom gland.

The protein localises to the secreted. Selective antagonist of neuronal tetrodotoxin (TTX)-sensitive voltage-gated sodium channels (IC(50)=1270 nM on Nav1.1/SCN1A, 270 nM on Nav1.2/SCN2A, 491 nM on Nav1.3/SCN3A and 232 nM on Nav1.7/SCN9A). This toxin suppress Nav1.7 current amplitude without significantly altering the activation, inactivation, and repriming kinetics. Short extreme depolarizations partially activate the toxin-bound channel, indicating voltage-dependent inhibition of this toxin. This toxin increases the deactivation of the Nav1.7 current after extreme depolarizations. The toxin-Nav1.7 complex is gradually dissociated upon prolonged strong depolarizations in a voltage-dependent manner, and the unbound toxin rebinds to Nav1.7 after a long repolarization. Moreover, analysis of chimeric channels showed that the DIIS3-S4 linker is critical for toxin binding to Nav1.7. These data are consistent with this toxin interacting with Nav1.7 site 4 and trapping the domain II voltage sensor in the closed state. The chain is Hainantoxin-III 5 from Cyriopagopus hainanus (Chinese bird spider).